The primary structure comprises 70 residues: Mu-agatoxin-Ao1a (70 aa).

Positions 1–20 (MKAIIFFCFLSVMVFIVAEA) are cleaved as a signal peptide. Positions 21 to 33 (SSLEALKIFEGER) are excised as a propeptide. 4 disulfide bridges follow: C35–C50, C42–C55, C49–C65, and C57–C63. Position 69 is an asparagine amide (N69).

This sequence belongs to the neurotoxin 07 (Beta/delta-agtx) family. 04 (aga-5) subfamily. As to expression, expressed by the venom gland.

The protein resides in the secreted. Its function is as follows. Insecticidal neurotoxin that modulates the insect Nav channel (DmNaV1/tipE (para/tipE)) in a unique manner, with both the activation and inactivation processes being affected. The voltage dependence of activation is shifted toward more hyperpolarized potentials (analogous to site 4 toxins) and a non-inactivating persistent sodium current is induced (site 3-like action). Interestingly, both effects take place in a voltage-dependent manner, producing a bell-shaped curve between -80 and 0 mV. The protein is Mu-agatoxin-Ao1a of Agelena orientalis (Funnel-web spider).